The following is a 359-amino-acid chain: Apelin receptor B (359 aa).

Residues 1-36 lie on the Extracellular side of the membrane; that stretch reads MNAMDNMTADYSPDYFDDAVNSSMCEYDEWEPSYSL. N-linked (GlcNAc...) asparagine glycosylation is found at asparagine 6 and asparagine 21. 2 disulfide bridges follow: cysteine 25–cysteine 288 and cysteine 107–cysteine 186. The helical transmembrane segment at 37-57 threads the bilayer; it reads IPVLYMLIFILGLTGNGVVIF. Residues 58-75 lie on the Cytoplasmic side of the membrane; it reads TVWRAQSKRRAADVYIGN. The helical transmembrane segment at 76–96 threads the bilayer; the sequence is LALADLTFVVTLPLWAVYTAL. The Extracellular segment spans residues 97 to 108; that stretch reads GYHWPFGVALCK. Residues 109 to 129 form a helical membrane-spanning segment; that stretch reads ISSYVVLLNMYASVFCLTCLS. Over 130–151 the chain is Cytoplasmic; the sequence is LDRYMAIVHSLTSTQLRTRGHM. Residues 152–172 traverse the membrane as a helical segment; it reads RASLTAIWLLSGVLAAPTLLF. Residues 173–213 lie on the Extracellular side of the membrane; it reads RTTVYDVETNRTSCAMDFNLVVSQPGQETYWIAGLSISSTA. N-linked (GlcNAc...) asparagine glycosylation occurs at asparagine 182. Residues 214–234 traverse the membrane as a helical segment; it reads LGFLIPLLAMMVCYGFIGCTV. Residues 235 to 251 are Cytoplasmic-facing; the sequence is TRHFNSLRKEDQRKRRL. Residues 252 to 272 traverse the membrane as a helical segment; it reads LKIITTLVVVFAACWMPFHVV. At 273–286 the chain is on the extracellular side; the sequence is KTMDALSYLNLAPD. A helical membrane pass occupies residues 287-307; sequence SCTFLNLLLLAHPYATCLAYV. The Cytoplasmic segment spans residues 308–359; the sequence is NSCLNPLLYAFFDLRFRSQCLCLLNLKKALHASPASSLSSQKTEAQSLATKV.

This sequence belongs to the G-protein coupled receptor 1 family. In terms of tissue distribution, mesendodermal expression at the blastoderm margin appears by 4.5 hpf. At early gastrulation, expression is maintained ventrolaterally while expression in dorsal cells and random deep cells declines. During gastrulation and segmentation, expression is maintained in adaxial, intermediate, and lateral plate mesoderm. During late segmentation, expressed in several regions including the forming heart. By 24 hpf, expressed in the dorsal aorta, caudal vein, and intersomitic blood vessels.

Its subcellular location is the cell membrane. G protein-coupled receptor for peptide hormones apelin (apln) and apelin receptor early endogenous ligand (apela), that plays a role in the regulation of normal cardiovascular function and fluid homeostasis. When acting as apelin receptor, activates both G(i) protein pathway that inhibits adenylate cyclase activity, and the beta-arrestin pathway that promotes internalization of the receptor. Also functions as mechanoreceptor that is activated by pathological stimuli in a G-protein-independent fashion to induce beta-arrestin signaling, hence eliciting cardiac hypertrophy. However, the presence of apelin ligand blunts cardiac hypertrophic induction from APLNR/APJ on response to pathological stimuli. Plays a key role in early development such as gastrulation, blood vessels formation and heart morphogenesis by acting as a receptor for apela hormone, promoting endoderm and mesendoderm cell migration and regulating the migration of cells fated to become myocardial progenitors, respectively. Positively regulates angioblast migration toward the embryonic midline, i.e. the position of the future vessel formation, during vasculogenesis. May promote sinus venosus (SV)-derived endothelial cells migration into the developing heart to promote coronary blood vessel development. Required for cardiovascular development, particularly for intersomitic vein angiogenesis by acting as a receptor for apln hormone. Plays a role in various processes in adults such as regulation of blood vessel formation, blood pressure, heart contractility and heart failure. Acts redundantly with agtrl1a in heart development. Its function is as follows. G protein-coupled receptor for peptide hormones apelin (APLN) and apelin receptor early endogenous ligand (APELA/ELA), that plays a role in the regulation of normal cardiovascular function and fluid homeostasis. When acting as apelin receptor, activates both G(i) protein pathway that inhibits adenylate cyclase activity, and the beta-arrestin pathway that promotes internalization of the receptor. APLNR/APJ also functions as mechanoreceptor that is activated by pathological stimuli in a G-protein-independent fashion to induce beta-arrestin signaling, hence eliciting cardiac hypertrophy. Plays a key role in early development such as gastrulation, blood vessels formation and heart morphogenesis by acting as a APELA receptor. May promote angioblast migration toward the embryonic midline, i.e. the position of the future vessel formation, during vasculogenesis. Promotes sinus venosus (SV)-derived endothelial cells migration into the developing heart to promote coronary blood vessel development. Also plays a role in various processes in adults such as regulation of blood vessel formation, blood pressure, heart contractility and heart failure. In Danio rerio (Zebrafish), this protein is Apelin receptor B (aplnrb).